The primary structure comprises 1752 residues: MNKKLFIFGLSLFLFLFIFNLSLSLKLSSKNNFYNHNHINNQIHRNNEGNNKLSKLIHLHNDVIDTTISNRDNILFNKKSLNQKSKGSLFLVHLNGPIEKQVHNELIKQLDQLFNGGEIIHYIPDNTYLISMIGSDNNDNNNNNKIELINRLKELIPSIQWLKPLEPRLKISPLFKQNQFQGDNQNEIDQLRIYYHENSNQQSNDIDNIISESSLTLVEKELISNNNNNNNNVLITVNLKNSKLSLESIIYKISTRSLVYWIEPSSSKLIKHTPSNKFAHYSIQSGSASTTSTPIWDVIGIKGDGEIVGCADTGIDINHCFFYDTNPIGSTHRKIISYSSGNGDQIDEIDGHGTHIVGTIIGSTTVDPSVSEFSGGAPNSKVAFVDLQVGSGNGLSIQSNLTAIYQSTYDQNAKVHCDAWNSNIGPFYTGVTEMIDRFQWDHPDFLVVRSAGNNVNFGFNSIYTLSQESTSKNSLVVGSSNQPSSTYLSSIDYWDWDFIYNSIRTSVCTQGQSIYGITCSDVPTQTTSVDIQTQCCSNPILAKICCSTEIQQQYQTNSTVYSEFIPSLFSGVGPTSDGRLKPDLLAPGSPIISSRSLGPSSTINHCSPITSGIATSALIAMEGSSQAAAVATSAAVLVRQYYRDGYFINGKVNSSVGFQPSASLVKATLINTASINVDSTLEYSQGFGNIQLSKLITTTNAQTTSLDIPSSIEKADPIINTGETNSYCFSLDSKADIDITLVWTDPAGSPLSTFTLVNNLDLALLAFVDGELSIYSGNSETIFKNTSQVIFDQLNNVEVIRIKDAPIGSYDVKIFGTNIVIPNQSYSVVIRTSGGTTLMKESECAQCFYDPNDDQSQMCEFDNGIGTQYCKDDNRFSKCVVYECNTGYVFDNGITKSCVTTLALTLYDIVLLGIFGIIIVGAVIFVLVCYKSKSLDQNKYFSLSKDKGGDGNSIRSNSVAGNNNNNNNNNNNNNNNNNNNNNNNNNNNNNNNNNSNGKQSNIELNSVGGGDDGTPNGDDQQQQNNSPQYDEDGRLISGQEVEISIFEVISLGKPESKILGLALFLSFIDVALGLAVPLVAANIFDYLYAGETGKISTTILTFALIIIGMIIVQFLSGILLALAGHRIIARLRREMFASLLKQDMAFFNERKTGELMSRLASDVSSVRSIISDSIPHMIIQIATIGGTLIMLFIISWKLSLVVLCPLPILLVFSKFYGGYIEVISVKVQDALADAATHAAETLFNMKTVRWFSAEEREVAKFSKLISVSYKIALKMTIWNGIYSSTSGIFEQLSVFILLWYGSSLVSNGDLTPSMLIAFNLFLPFITGAVTQVASLYTTYKSYKGSSYRFFEIMQRVPDIQGEGGITRTKVRGDIQFNKVSFAYSSNPDQLVLEKIDIKFEPGTITALIGPSGGGKSTMLSLIGRLYNIDGGSITLDGTNIKDFNVPNLHEHISIVNQEPSLFSGSIAENIMFGKPTATRSEIIEACKQANAHDFITAMPEGYDTLIGERGTALSGGQKQRIAIARTIIKNPTVLLLDETTSELDVESEKLVQDSIDKLVVGRTVIIVAHRLTTILTADIIAVVSDSTISEMGTPEELLAKKGMFYDFVQIQYGKQGEELDIQLPSNSRNTRNADKLRNRSETIKQIAKINNIIPIHRPQRGDDDNEDDENNSGQGSSRSPPPMWRQAKKNANVNKSMLLTRRNTHVQHQSSSGGWQKGNVDDKLQRVLQKSRKKGFMNNQDHKDIKATLVLY.

A signal peptide spans 1–24 (MNKKLFIFGLSLFLFLFIFNLSLS). The N-linked (GlcNAc...) asparagine glycan is linked to Asn20. Residues 280–696 (HYSIQSGSAS…FGNIQLSKLI (417 aa)) enclose the Peptidase S8 domain. Residues Asp312 and His352 each act as charge relay system in the active site. N-linked (GlcNAc...) asparagine glycosylation is found at Asn400 and Asn557. Ser625 acts as the Charge relay system in catalysis. N-linked (GlcNAc...) asparagine glycans are attached at residues Asn653, Asn785, and Asn823. The helical transmembrane segment at 909–929 (IVLLGIFGIIIVGAVIFVLVC) threads the bilayer. The segment at 946 to 1032 (DKGGDGNSIR…QNNSPQYDED (87 aa)) is disordered. The span at 962–994 (NNNNNNNNNNNNNNNNNNNNNNNNNNNNNNNNN) shows a compositional bias: low complexity. Asn993 carries an N-linked (GlcNAc...) asparagine glycan. A compositionally biased stretch (polar residues) spans 995-1004 (SNGKQSNIEL). Low complexity predominate over residues 1013–1028 (GTPNGDDQQQQNNSPQ). The next 6 membrane-spanning stretches (helical) occupy residues 1058–1078 (ILGLALFLSFIDVALGLAVPL), 1102–1122 (FALIIIGMIIVQFLSGILLAL), 1174–1194 (IPHMIIQIATIGGTLIMLFII), 1200–1220 (LVVLCPLPILLVFSKFYGGYI), 1285–1305 (TSGIFEQLSVFILLWYGSSLV), and 1315–1335 (LIAFNLFLPFITGAVTQVASL). Positions 1059-1341 (LGLALFLSFI…VASLYTTYKS (283 aa)) constitute an ABC transmembrane type-1 domain. The ABC transporter domain maps to 1374–1610 (IQFNKVSFAY…KGMFYDFVQI (237 aa)). 1409-1416 (GPSGGGKS) is an ATP binding site. The interval 1621–1686 (IQLPSNSRNT…SRSPPPMWRQ (66 aa)) is disordered. Positions 1631-1642 (RNADKLRNRSET) are enriched in basic and acidic residues. N-linked (GlcNAc...) asparagine glycosylation is found at Asn1638, Asn1670, and Asn1694.

This sequence in the C-terminal section; belongs to the ABC transporter superfamily. ABCB family. Multidrug resistance exporter (TC 3.A.1.201) subfamily. In the N-terminal section; belongs to the peptidase S8 family.

The protein localises to the membrane. Its function is as follows. Required for a general cell fate determination at the onset of development. Required for the specification of an initial population of prespore cells in which tagA is expressed. Required for normal SDF-2 signaling during spore encapsulation. The polypeptide is Serine protease/ABC transporter B family protein tagA (tagA) (Dictyostelium discoideum (Social amoeba)).